We begin with the raw amino-acid sequence, 202 residues long: Imidazoleglycerol-phosphate dehydratase (202 aa).

The protein belongs to the imidazoleglycerol-phosphate dehydratase family.

The protein resides in the cytoplasm. It catalyses the reaction D-erythro-1-(imidazol-4-yl)glycerol 3-phosphate = 3-(imidazol-4-yl)-2-oxopropyl phosphate + H2O. It functions in the pathway amino-acid biosynthesis; L-histidine biosynthesis; L-histidine from 5-phospho-alpha-D-ribose 1-diphosphate: step 6/9. The protein is Imidazoleglycerol-phosphate dehydratase of Rhizobium leguminosarum bv. trifolii (strain WSM2304).